The chain runs to 934 residues: Complement component C6 (934 aa).

A signal peptide spans 1-21 (MTRHLTLCFILLVMLIDKSEA). Cystine bridges form between Cys22-Cys61, Cys24-Cys65, Cys35-Cys73, Cys39-Cys78, Cys82-Cys117, Cys93-Cys127, Cys96-Cys133, Cys140-Cys151, Cys146-Cys164, Cys158-Cys173, and Cys180-Cys218. 2 consecutive TSP type-1 domains span residues 22–79 (CFCD…QTCP) and 81–134 (NCVL…KLCK). The region spanning 138–175 (TNCKNKFLCDSGRCIPSKLECNGENDCGDNSDERNCGR) is the LDL-receptor class A domain. Residues Leu156, Asn159, Glu161, Asp163, Asp169, and Glu170 each coordinate Ca(2+). The region spanning 176 to 522 (TKPVCTRIYT…EYAAKFDPCQ (347 aa)) is the MACPF domain. Residues 278–290 (FFPIPIFHFSEKN) form a beta stranded membrane-spanning segment. Asn324 carries N-linked (GlcNAc...) asparagine glycosylation. Intrachain disulfides connect Cys399–Cys420, Cys499–Cys623, Cys521–Cys570, Cys523–Cys539, Cys526–Cys541, Cys543–Cys552, Cys577–Cys611, Cys589–Cys601, Cys644–Cys686, Cys672–Cys699, Cys704–Cys746, Cys732–Cys761, Cys773–Cys823, Cys784–Cys801, Cys786–Cys837, and Cys793–Cys816. The chain crosses the membrane as a beta stranded span at residues 402–415 (YETKKLKFLYMEIH). The EGF-like domain occupies 523–553 (CAPCPNNGRPRLSGTECLCVCQSGTYGENCE). Positions 565-612 (DGNWGCWSSWSACNAAYRRSRTRECNNPAPQRGGQSCGGKDQQEEDCT) constitute a TSP type-1 3 domain. 2 CCP regions span residues 611–688 (CTVS…RCLP) and 689–765 (DRTW…EQAI). Sushi domains follow at residues 642-701 (SGCS…ECQR) and 702-763 (TSCL…TCEQ). A C5b-binding domain region spans residues 642–934 (SGCSQPPLPE…EILNPGRCPD (293 aa)). Positions 766–840 (LTKSKDLCPP…FVHSGSCQEG (75 aa)) are factor I module (FIM) 1. Residues 785 to 839 (ICMSPEEDCSAYSEDLCIFDGGSSQYFTSSACKFLAGKCLNNTQSHFVHSGSCQE) form the Kazal-like 1 domain. Asn825, Asn855, and Asn872 each carry an N-linked (GlcNAc...) asparagine glycan. The interval 858–934 (KRVSCGYNTC…EILNPGRCPD (77 aa)) is factor I module (FIM) 2. Cystine bridges form between Cys862–Cys873, Cys867–Cys919, Cys880–Cys897, Cys882–Cys932, and Cys888–Cys912. The region spanning 876–934 (HTSNCVCLLPPQCSKDENQLYCVKIGSSMREKTVNICTLGAVRCANIKVEILNPGRCPD) is the Kazal-like 2 domain.

Belongs to the complement C6/C7/C8/C9 family. Component of the membrane attack complex (MAC), composed of complement C5b, C6, C7, C8A, C8B, C8G and multiple copies of the pore-forming subunit C9. Post-translationally, all cysteine residues are assumed to be cross-linked to one another. Individual modules containing an even number of conserved cysteine residues are supposed to have disulfide linkages only within the same module.

The protein localises to the secreted. The protein resides in the target cell membrane. Membrane attack complex (MAC) assembly is inhibited by CD59, thereby protecting self-cells from damage during complement activation. MAC assembly is also inhibited by clusterin (CLU) chaperones that inhibit polymerization of C9. In terms of biological role, component of the membrane attack complex (MAC), a multiprotein complex activated by the complement cascade, which inserts into a target cell membrane and forms a pore, leading to target cell membrane rupture and cell lysis. The MAC is initiated by proteolytic cleavage of C5 into complement C5b in response to the classical, alternative, lectin and GZMK complement pathways. The complement pathways consist in a cascade of proteins that leads to phagocytosis and breakdown of pathogens and signaling that strengthens the adaptive immune system. Together with component C5b, involved in MAC complex assembly: complement C5b and C6 associate with the outer leaflet of target cell membrane, reducing the energy for membrane bending. The chain is Complement component C6 from Mus musculus (Mouse).